Consider the following 486-residue polypeptide: N-succinylglutamate 5-semialdehyde dehydrogenase (486 aa).

Position 220 to 225 (glycine 220 to glycine 225) interacts with NAD(+). Active-site residues include glutamate 243 and cysteine 277.

This sequence belongs to the aldehyde dehydrogenase family. AstD subfamily.

It catalyses the reaction N-succinyl-L-glutamate 5-semialdehyde + NAD(+) + H2O = N-succinyl-L-glutamate + NADH + 2 H(+). The protein operates within amino-acid degradation; L-arginine degradation via AST pathway; L-glutamate and succinate from L-arginine: step 4/5. In terms of biological role, catalyzes the NAD-dependent reduction of succinylglutamate semialdehyde into succinylglutamate. The protein is N-succinylglutamate 5-semialdehyde dehydrogenase of Shewanella woodyi (strain ATCC 51908 / MS32).